A 325-amino-acid polypeptide reads, in one-letter code: MSFSSSAKAEVSKKLLQTSCCRKAAIAAFLKFAGVIYKSEGIFSFKASFENAQTARAYFLLMKNGFSKHCEVTIKKNSKLNKNYVYTIILPPSTDNLQILKELHFVKKTSKEYILSFSLKEELVKKKCCKKAFLQATFLSCGSITNPEKMYHLEFDMKTKEDAEFLQKVLRSFEFEAKIVERKSHYVVYLKEGEQIVDFLNIIGAHAALLELENIRIVKELRNNVNRLVNCETANLEKTINASMRHIENIEFIEKTIGIDNLPENLREIARLRIKYKDASLKELGSMLKNPLGKSGVNHRLRKIDKIAEELRKGGILYAKPSDES.

Residues 280-313 constitute a DNA-binding region (H-T-H motif); the sequence is SLKELGSMLKNPLGKSGVNHRLRKIDKIAEELRK.

It belongs to the WhiA family.

In terms of biological role, involved in cell division and chromosome segregation. The chain is Probable cell division protein WhiA from Caldicellulosiruptor saccharolyticus (strain ATCC 43494 / DSM 8903 / Tp8T 6331).